The following is a 270-amino-acid chain: Orotidine 5'-phosphate decarboxylase (270 aa).

The Proton donor role is filled by Lys89.

This sequence belongs to the OMP decarboxylase family. Type 2 subfamily.

It carries out the reaction orotidine 5'-phosphate + H(+) = UMP + CO2. The protein operates within pyrimidine metabolism; UMP biosynthesis via de novo pathway; UMP from orotate: step 2/2. The sequence is that of Orotidine 5'-phosphate decarboxylase from Dehalococcoides mccartyi (strain ATCC BAA-2266 / KCTC 15142 / 195) (Dehalococcoides ethenogenes (strain 195)).